Reading from the N-terminus, the 76-residue chain is MNTATGFIVLLVLATILGGIEAGESHMRKDAMGRVRRQYCVPVDQPCSLNTQPCCDDATCTQERNENGHTVYYCRA.

A signal peptide spans 1–22; that stretch reads MNTATGFIVLLVLATILGGIEA. A propeptide spanning residues 23–35 is cleaved from the precursor; it reads GESHMRKDAMGRV. Intrachain disulfides connect cysteine 40–cysteine 55, cysteine 47–cysteine 60, and cysteine 54–cysteine 74.

It belongs to the neurotoxin 08 (Shiva) family. 02 (omega/kappa toxin) subfamily. Expressed by the venom gland.

It localises to the secreted. In terms of biological role, toxin that may inhibit ion channels. The polypeptide is Omega/Kappa-hexatoxin-Hv1h (Hadronyche versuta (Blue mountains funnel-web spider)).